Here is a 315-residue protein sequence, read N- to C-terminus: Methionyl-tRNA formyltransferase (315 aa).

Residue 113-116 (SLLP) coordinates (6S)-5,6,7,8-tetrahydrofolate.

It belongs to the Fmt family.

The enzyme catalyses L-methionyl-tRNA(fMet) + (6R)-10-formyltetrahydrofolate = N-formyl-L-methionyl-tRNA(fMet) + (6S)-5,6,7,8-tetrahydrofolate + H(+). Its function is as follows. Attaches a formyl group to the free amino group of methionyl-tRNA(fMet). The formyl group appears to play a dual role in the initiator identity of N-formylmethionyl-tRNA by promoting its recognition by IF2 and preventing the misappropriation of this tRNA by the elongation apparatus. This is Methionyl-tRNA formyltransferase from Klebsiella pneumoniae (strain 342).